Reading from the N-terminus, the 91-residue chain is UPF0250 protein Lcho_4239 (91 aa).

This sequence belongs to the UPF0250 family.

This is UPF0250 protein Lcho_4239 from Leptothrix cholodnii (strain ATCC 51168 / LMG 8142 / SP-6) (Leptothrix discophora (strain SP-6)).